A 363-amino-acid chain; its full sequence is UDP-3-O-acylglucosamine N-acyltransferase (363 aa).

The Proton acceptor role is filled by histidine 259.

Belongs to the transferase hexapeptide repeat family. LpxD subfamily. In terms of assembly, homotrimer.

The enzyme catalyses a UDP-3-O-[(3R)-3-hydroxyacyl]-alpha-D-glucosamine + a (3R)-hydroxyacyl-[ACP] = a UDP-2-N,3-O-bis[(3R)-3-hydroxyacyl]-alpha-D-glucosamine + holo-[ACP] + H(+). It functions in the pathway bacterial outer membrane biogenesis; LPS lipid A biosynthesis. In terms of biological role, catalyzes the N-acylation of UDP-3-O-acylglucosamine using 3-hydroxyacyl-ACP as the acyl donor. Is involved in the biosynthesis of lipid A, a phosphorylated glycolipid that anchors the lipopolysaccharide to the outer membrane of the cell. The polypeptide is UDP-3-O-acylglucosamine N-acyltransferase (Ruegeria pomeroyi (strain ATCC 700808 / DSM 15171 / DSS-3) (Silicibacter pomeroyi)).